Consider the following 286-residue polypeptide: uncharacterized protein (286 aa).

The AB hydrolase-1 domain occupies 26-268 (PLIILCHGFC…DACHYDIYEG (243 aa)).

Belongs to the AB hydrolase superfamily.

This is an uncharacterized protein from Escherichia coli.